The sequence spans 195 residues: MVLCCFALLITAVLVASKGAEEKPTCDPDHENKKVLWTCWTDDYNTTCFERSFYYNRQTDRCEEFLYEGCGGNDNNFPSIEDCLSNCKTNMTDYEIKFFQRLNKTLSCTSTYEKGSISRYILNETSQECQRADVKNGDIHFPSFRKCVYDCKPNSTSNPYCNSIKENGTKPRAPWNCYRQDGYKALFCYKPKNSK.

The N-terminal stretch at 1–20 (MVLCCFALLITAVLVASKGA) is a signal peptide. The 62-residue stretch at 26–87 (CDPDHENKKV…PSIEDCLSNC (62 aa)) folds into the BPTI/Kunitz inhibitor domain. 3 disulfides stabilise this stretch: Cys-26–Cys-87, Cys-39–Cys-70, and Cys-62–Cys-83.

In terms of tissue distribution, primarily expressed in salivary glands and weakly expressed in the midgut of fed ticks.

It is found in the secreted. Functionally, anticoagulant protein that inhibits the serine proteases trypsin and elastase, but not thrombin. The anticoagulant effect of this recombinant protein on blood clotting is found only in the activated partial thromboplastin time (APTT) assays, but not in the prothrombin time (PT) assays. This is Anticoagulant protein rhipilin-2 from Rhipicephalus haemaphysaloides (Tick).